A 384-amino-acid chain; its full sequence is Lipoyl synthase 2, chloroplastic (384 aa).

The N-terminal 48 residues, 1 to 48, are a transit peptide targeting the chloroplast; that stretch reads MAAYCSRVYHHHPVSPSTMQGSLARPSIHAGSASLTFRARPNSVSIVR. Residues Cys-108, Cys-113, Cys-119, Cys-145, Cys-149, Cys-152, and Ser-360 each contribute to the [4Fe-4S] cluster site. A Radical SAM core domain is found at 128–349; sequence GDGDGIATAT…KEYGESLGFL (222 aa).

Belongs to the radical SAM superfamily. Lipoyl synthase family. [4Fe-4S] cluster serves as cofactor.

It localises to the plastid. The protein localises to the chloroplast. It carries out the reaction [[Fe-S] cluster scaffold protein carrying a second [4Fe-4S](2+) cluster] + N(6)-octanoyl-L-lysyl-[protein] + 2 oxidized [2Fe-2S]-[ferredoxin] + 2 S-adenosyl-L-methionine + 4 H(+) = [[Fe-S] cluster scaffold protein] + N(6)-[(R)-dihydrolipoyl]-L-lysyl-[protein] + 4 Fe(3+) + 2 hydrogen sulfide + 2 5'-deoxyadenosine + 2 L-methionine + 2 reduced [2Fe-2S]-[ferredoxin]. Its pathway is protein modification; protein lipoylation via endogenous pathway; protein N(6)-(lipoyl)lysine from octanoyl-[acyl-carrier-protein]: step 2/2. Catalyzes the radical-mediated insertion of two sulfur atoms into the C-6 and C-8 positions of the octanoyl moiety bound to the lipoyl domains of lipoate-dependent enzymes, thereby converting the octanoylated domains into lipoylated derivatives. This is Lipoyl synthase 2, chloroplastic from Oryza sativa subsp. indica (Rice).